The following is a 214-amino-acid chain: A-type ATP synthase subunit D (214 aa).

The protein belongs to the V-ATPase D subunit family. Has multiple subunits with at least A(3), B(3), C, D, E, F, H, I and proteolipid K(x).

The protein localises to the cell membrane. Functionally, component of the A-type ATP synthase that produces ATP from ADP in the presence of a proton gradient across the membrane. The sequence is that of A-type ATP synthase subunit D from Thermococcus kodakarensis (strain ATCC BAA-918 / JCM 12380 / KOD1) (Pyrococcus kodakaraensis (strain KOD1)).